Here is a 391-residue protein sequence, read N- to C-terminus: Probable tRNA sulfurtransferase (391 aa).

Residues 60-167 enclose the THUMP domain; it reads DEIIDHIKKV…KDNCYVYTDR (108 aa). Residues 185-186, 210-211, R267, G289, and Q298 contribute to the ATP site; these read LL and HF.

Belongs to the ThiI family.

The protein resides in the cytoplasm. The catalysed reaction is [ThiI sulfur-carrier protein]-S-sulfanyl-L-cysteine + a uridine in tRNA + 2 reduced [2Fe-2S]-[ferredoxin] + ATP + H(+) = [ThiI sulfur-carrier protein]-L-cysteine + a 4-thiouridine in tRNA + 2 oxidized [2Fe-2S]-[ferredoxin] + AMP + diphosphate. It catalyses the reaction [ThiS sulfur-carrier protein]-C-terminal Gly-Gly-AMP + S-sulfanyl-L-cysteinyl-[cysteine desulfurase] + AH2 = [ThiS sulfur-carrier protein]-C-terminal-Gly-aminoethanethioate + L-cysteinyl-[cysteine desulfurase] + A + AMP + 2 H(+). It participates in cofactor biosynthesis; thiamine diphosphate biosynthesis. In terms of biological role, catalyzes the ATP-dependent transfer of a sulfur to tRNA to produce 4-thiouridine in position 8 of tRNAs, which functions as a near-UV photosensor. Also catalyzes the transfer of sulfur to the sulfur carrier protein ThiS, forming ThiS-thiocarboxylate. This is a step in the synthesis of thiazole, in the thiamine biosynthesis pathway. The sulfur is donated as persulfide by IscS. In Finegoldia magna (strain ATCC 29328 / DSM 20472 / WAL 2508) (Peptostreptococcus magnus), this protein is Probable tRNA sulfurtransferase.